A 373-amino-acid polypeptide reads, in one-letter code: Protein translocase subunit SecF (373 aa).

6 helical membrane-spanning segments follow: residues 26–46 (IWYGISILITITAIVGLAVRG), 142–162 (WQGLGIFMVLVVIYLAIAFEW), 166–186 (LAAFVALIHDITITVGIYALV), 193–213 (GTVIGLLTILGYSLYDTVVVF), 251–271 (VVALLPVAGLLFIGGGVLGAG), and 280–300 (LFVGLAAGAYSSIFIATPLVA). The segment covering 322 to 332 (QGAAKGESAES) has biased composition (low complexity). Residues 322–373 (QGAAKGESAESAADEGAYDADEPDDAAPAVVGPRNQPASRGRGRGRPSGKRR) form a disordered region. Over residues 333 to 346 (AADEGAYDADEPDD) the composition is skewed to acidic residues. The span at 362 to 373 (GRGRGRPSGKRR) shows a compositional bias: basic residues.

This sequence belongs to the SecD/SecF family. SecF subfamily. Forms a complex with SecD. Part of the essential Sec protein translocation apparatus which comprises SecA, SecYEG and auxiliary proteins SecDF. Other proteins may also be involved.

The protein resides in the cell membrane. Its function is as follows. Part of the Sec protein translocase complex. Interacts with the SecYEG preprotein conducting channel. SecDF uses the proton motive force (PMF) to complete protein translocation after the ATP-dependent function of SecA. The sequence is that of Protein translocase subunit SecF from Streptomyces coelicolor (strain ATCC BAA-471 / A3(2) / M145).